The following is a 226-amino-acid chain: V-type proton ATPase subunit E (226 aa).

Belongs to the V-ATPase E subunit family. V-ATPase is a heteromultimeric enzyme composed of a peripheral catalytic V1 complex (components A to H) attached to an integral membrane V0 proton pore complex (components: a, c, c', c'', d, e, f and VOA1).

It is found in the vacuole membrane. Functionally, subunit of the V1 complex of vacuolar(H+)-ATPase (V-ATPase), a multisubunit enzyme composed of a peripheral complex (V1) that hydrolyzes ATP and a membrane integral complex (V0) that translocates protons. V-ATPase is responsible for acidifying and maintaining the pH of intracellular compartments. This is V-type proton ATPase subunit E (VMA4) from Candida albicans (Yeast).